Consider the following 163-residue polypeptide: Putative 4-hydroxy-4-methyl-2-oxoglutarate aldolase (163 aa).

Substrate contacts are provided by residues 76–79 (GDML) and Arg-98. Asp-99 is a binding site for a divalent metal cation.

The protein belongs to the class II aldolase/RraA-like family. In terms of assembly, homotrimer. Requires a divalent metal cation as cofactor.

The catalysed reaction is 4-hydroxy-4-methyl-2-oxoglutarate = 2 pyruvate. It carries out the reaction oxaloacetate + H(+) = pyruvate + CO2. Functionally, catalyzes the aldol cleavage of 4-hydroxy-4-methyl-2-oxoglutarate (HMG) into 2 molecules of pyruvate. Also contains a secondary oxaloacetate (OAA) decarboxylase activity due to the common pyruvate enolate transition state formed following C-C bond cleavage in the retro-aldol and decarboxylation reactions. The sequence is that of Putative 4-hydroxy-4-methyl-2-oxoglutarate aldolase from Pseudomonas putida (strain W619).